Reading from the N-terminus, the 83-residue chain is Large ribosomal subunit protein bL31B (83 aa).

This sequence belongs to the bacterial ribosomal protein bL31 family. Type B subfamily. In terms of assembly, part of the 50S ribosomal subunit.

In Tropheryma whipplei (strain TW08/27) (Whipple's bacillus), this protein is Large ribosomal subunit protein bL31B.